The chain runs to 181 residues: MSFQEVWEKEPMKKPRIQKVTVNFGVGEAGDRLTIGAKVIEELTGQSPVRTLAKQTNPAFGIRKKLPIGLKVTLRGKNAEEFLGNAFTAFKTSGKVLYASSFDQVGNFSFGVPEHIDFPGQKYDPSIGIYGMDVCVTFEKSGYRVKSRKVKRSHIPKKHLVTKDEAIEYIQTKFDTEVVRE.

It belongs to the universal ribosomal protein uL5 family. In terms of assembly, part of the 50S ribosomal subunit; contacts the 5S rRNA and probably tRNA. Forms a bridge to the 30S subunit in the 70S ribosome.

In terms of biological role, this is one of the proteins that bind and probably mediate the attachment of the 5S RNA into the large ribosomal subunit, where it forms part of the central protuberance. In the 70S ribosome it contacts protein S13 of the 30S subunit (bridge B1b), connecting the 2 subunits; this bridge is implicated in subunit movement. May contact the P site tRNA; the 5S rRNA and some of its associated proteins might help stabilize positioning of ribosome-bound tRNAs. The sequence is that of Large ribosomal subunit protein uL5 from Methanococcus maripaludis (strain C6 / ATCC BAA-1332).